The chain runs to 258 residues: Triosephosphate isomerase (258 aa).

A substrate-binding site is contributed by 11–13 (NWK). Residue His101 is the Electrophile of the active site. Glu173 functions as the Proton acceptor in the catalytic mechanism. Substrate contacts are provided by residues Gly179, Ser219, and 240-241 (GG).

This sequence belongs to the triosephosphate isomerase family. In terms of assembly, homodimer.

Its subcellular location is the cytoplasm. The enzyme catalyses D-glyceraldehyde 3-phosphate = dihydroxyacetone phosphate. It participates in carbohydrate biosynthesis; gluconeogenesis. It functions in the pathway carbohydrate degradation; glycolysis; D-glyceraldehyde 3-phosphate from glycerone phosphate: step 1/1. Its function is as follows. Involved in the gluconeogenesis. Catalyzes stereospecifically the conversion of dihydroxyacetone phosphate (DHAP) to D-glyceraldehyde-3-phosphate (G3P). This chain is Triosephosphate isomerase, found in Streptomyces avermitilis (strain ATCC 31267 / DSM 46492 / JCM 5070 / NBRC 14893 / NCIMB 12804 / NRRL 8165 / MA-4680).